A 93-amino-acid chain; its full sequence is Cell division topological specificity factor (93 aa).

The protein belongs to the MinE family.

Its function is as follows. Prevents the cell division inhibition by proteins MinC and MinD at internal division sites while permitting inhibition at polar sites. This ensures cell division at the proper site by restricting the formation of a division septum at the midpoint of the long axis of the cell. This is Cell division topological specificity factor from Alkaliphilus oremlandii (strain OhILAs) (Clostridium oremlandii (strain OhILAs)).